The primary structure comprises 229 residues: Ribonuclease HII (229 aa).

The region spanning 34–225 is the RNase H type-2 domain; it reads GPVAGVDEAG…VKAAHDQWLQ (192 aa). A divalent metal cation is bound by residues Asp-40, Glu-41, and Asp-134.

This sequence belongs to the RNase HII family. Mn(2+) is required as a cofactor. Requires Mg(2+) as cofactor.

Its subcellular location is the cytoplasm. It carries out the reaction Endonucleolytic cleavage to 5'-phosphomonoester.. Its function is as follows. Endonuclease that specifically degrades the RNA of RNA-DNA hybrids. This is Ribonuclease HII from Corynebacterium diphtheriae (strain ATCC 700971 / NCTC 13129 / Biotype gravis).